The sequence spans 115 residues: uncharacterized protein (115 aa).

The next 3 membrane-spanning stretches (helical) occupy residues 1-21, 33-53, and 54-74; these read MFLA…FGSW, ALAL…LAAG, and GVVA…VCIA.

To M.leprae ML0030.

The protein localises to the cell membrane. This is an uncharacterized protein from Mycobacterium tuberculosis (strain CDC 1551 / Oshkosh).